We begin with the raw amino-acid sequence, 120 residues long: NAD(P)H-quinone oxidoreductase subunit 3, chloroplastic (120 aa).

3 helical membrane-spanning segments follow: residues 9-29, 64-84, and 88-108; these read IFWA…LISG, MFAL…PWAM, and VLGV…IVGS.

It belongs to the complex I subunit 3 family. NDH is composed of at least 16 different subunits, 5 of which are encoded in the nucleus.

It localises to the plastid. It is found in the chloroplast thylakoid membrane. It catalyses the reaction a plastoquinone + NADH + (n+1) H(+)(in) = a plastoquinol + NAD(+) + n H(+)(out). The catalysed reaction is a plastoquinone + NADPH + (n+1) H(+)(in) = a plastoquinol + NADP(+) + n H(+)(out). In terms of biological role, NDH shuttles electrons from NAD(P)H:plastoquinone, via FMN and iron-sulfur (Fe-S) centers, to quinones in the photosynthetic chain and possibly in a chloroplast respiratory chain. The immediate electron acceptor for the enzyme in this species is believed to be plastoquinone. Couples the redox reaction to proton translocation, and thus conserves the redox energy in a proton gradient. The protein is NAD(P)H-quinone oxidoreductase subunit 3, chloroplastic of Platanus occidentalis (Sycamore).